We begin with the raw amino-acid sequence, 188 residues long: Dual specificity protein phosphatase 18 (188 aa).

Positions 19-160 (GLSQITKSLF…LIHYELQLFG (142 aa)) constitute a Tyrosine-protein phosphatase domain. A sufficient for mitochondrial localization region spans residues 95 to 141 (MQKGRTLLHCAAGVSRSAALCLAYLMKYHAMSLVDAHTWTKSCRPII). Cys-104 (phosphocysteine intermediate) is an active-site residue.

The protein belongs to the protein-tyrosine phosphatase family. Non-receptor class dual specificity subfamily.

Its subcellular location is the cytoplasm. The protein localises to the nucleus. It is found in the mitochondrion inner membrane. It catalyses the reaction O-phospho-L-tyrosyl-[protein] + H2O = L-tyrosyl-[protein] + phosphate. The catalysed reaction is O-phospho-L-seryl-[protein] + H2O = L-seryl-[protein] + phosphate. The enzyme catalyses O-phospho-L-threonyl-[protein] + H2O = L-threonyl-[protein] + phosphate. Can dephosphorylate single and diphosphorylated synthetic MAPK peptides, with preference for the phosphotyrosine and diphosphorylated forms over phosphothreonine. In vitro, dephosphorylates p-nitrophenyl phosphate (pNPP). The sequence is that of Dual specificity protein phosphatase 18 (Dusp18) from Mus musculus (Mouse).